The chain runs to 618 residues: Neurosecretory protein VGF (618 aa).

The first 23 residues, 1-23, serve as a signal peptide directing secretion; sequence MKSLRLPATVLFCLLLLIKGLGA. 3 disordered regions span residues 23–46, 86–201, and 219–262; these read AAPP…PVAG, VLLQ…LESP, and PERA…GEAL. Pro residues predominate over residues 26 to 37; that stretch reads PGHPEAQPPPPS. Residues 180–195 are compositionally biased toward low complexity; sequence ETAAAETETRTHTLTR. Residues 301 to 332 adopt a coiled-coil conformation; sequence LAQVEAGRRQAEATRQAAAQEERLADLASDLL. Glutamine 310 bears the Pyrrolidone carboxylic acid mark. Residues 342–603 are disordered; the sequence is RQRGLGGRGL…EAEERRLQEQ (262 aa). Positions 356-378 are enriched in basic and acidic residues; it reads GGGRETARQQEEAEQERRGGEER. Residues 379-395 are compositionally biased toward acidic residues; it reads VGEEDEEAAEAEAEAEE. Residues 416 to 434 show a composition bias toward basic and acidic residues; that stretch reads AEDKRSREETPGHRRKEAE. Position 421 is a phosphoserine (serine 421). Threonine 425 is subject to Phosphothreonine. The span at 435-451 shows a compositional bias: acidic residues; sequence GAEEGGAEDEDDDEEMD. A compositionally biased stretch (pro residues) spans 490 to 500; it reads PPEPVPPPRAA. Residues 578 to 602 show a composition bias toward basic and acidic residues; the sequence is HYPDREAQARRAQEEAEAEERRLQE.

In terms of processing, multiple peptides are derived from VGF, with activities in synaptic plasticity, antidepression, penile erection, autonomic activation, and increases in energy expenditure.

The protein resides in the secreted. The protein localises to the cytoplasmic vesicle. It localises to the secretory vesicle. Functionally, secreted polyprotein that is packaged and proteolytically processed by prohormone convertases PCSK1 and PCSK2 in a cell-type-specific manner. VGF and peptides derived from its processing play many roles in neurogenesis and neuroplasticity associated with learning, memory, depression and chronic pain. In terms of biological role, plays a role in the control of body fluid homeostasis by regulating vasopressin release. Suppresses presynaptic glutamatergic neurons connected to vasopressin neurons. Its function is as follows. Plays a role in the control of body fluid homeostasis by regulating vasopressin release. Activates GABAergic interneurons which are inhibitory neurons of the nervous system and thereby suppresses presynaptic glutamatergic neurons. Also stimulates feeding behavior in an orexin-dependent manner in the hypothalamus. Functions as a positive regulator for the activation of orexin neurons resulting in elevated gastric acid secretion and gastric emptying. In Bos taurus (Bovine), this protein is Neurosecretory protein VGF.